The primary structure comprises 537 residues: MKSYNVLPLAYISLFLMLFYQVWAQFPRECANIEALRRGVCCPDLLPSSGPGTDPCGSSSGRGRCVAVIADSRPHSRHYPHDGKDDREAWPLRFFNRTCQCNDNFSGHNCGTCRPGWRGAACNQKILTVRRNLLDLSPEEKSHFVRALDMAKRTTHPQFVIATRRLEDILGPDGNTPQFENISVYNYFVWTHYYSVKKTFLGTGQESFGDVDFSHEGPAFLTWHRYHLLQLERDMQEMLQEPSFSLPYWNFATGKNVCDVCTDDLMGSRSNFDSTLISPNSVFSQWRVVCESLEEYDTLGTLCNSTEGGPIRRNPAGNVGRPAVQRLPEPQDVTQCLEVRVFDTPPFYSNSTDSFRNTVEGYSAPTGKYDPAVRSLHNLAHLFLNGTGGQTHLSPNDPIFVLLHTFTDAVFDEWLRRYNADISTFPLENAPIGHNRQYNMVPFWPPVTNTEMFVTAPDNLGYAYEVQWPGQEFTVSEIITIAVVAALLLVAAIFGVASCLIRSRSTKNEANQPLLTDHYQRYAEDYEELPNPNHSMV.

A signal peptide spans 1 to 24 (MKSYNVLPLAYISLFLMLFYQVWA). Over 25-477 (QFPRECANIE…WPGQEFTVSE (453 aa)) the chain is Lumenal, melanosome. 5 disulfide bridges follow: Cys30–Cys41, Cys42–Cys65, Cys56–Cys99, Cys101–Cys110, and Cys113–Cys122. Residues Asn96 and Asn104 are each glycosylated (N-linked (GlcNAc...) asparagine). Asn181 is a glycosylation site (N-linked (GlcNAc...) asparagine). His192, His215, and His224 together coordinate Zn(2+). Cystine bridges form between Cys258–Cys261 and Cys290–Cys303. N-linked (GlcNAc...) asparagine glycosylation is found at Asn304 and Asn350. Zn(2+) contacts are provided by His377 and His381. A glycan (N-linked (GlcNAc...) asparagine) is linked at Asn385. His404 is a binding site for Zn(2+). The helical transmembrane segment at 478–501 (IITIAVVAALLLVAAIFGVASCLI) threads the bilayer. The Cytoplasmic segment spans residues 502-537 (RSRSTKNEANQPLLTDHYQRYAEDYEELPNPNHSMV).

The protein belongs to the tyrosinase family. As to quaternary structure, monomer. Interacts with ATP7A. Interacts with SLC45A2. Cu(2+) is required as a cofactor. The cofactor is Zn(2+). Glycosylated. Pigment cells.

Its subcellular location is the melanosome membrane. The catalysed reaction is 2 5,6-dihydroxyindole-2-carboxylate + O2 = 2 indole-5,6-quinone-2-carboxylate + 2 H2O. The protein operates within pigment biosynthesis; melanin biosynthesis. Its function is as follows. Plays a role in melanin biosynthesis. Catalyzes the oxidation of 5,6-dihydroxyindole-2-carboxylic acid (DHICA) into indole-5,6-quinone-2-carboxylic acid. May regulate or influence the type of melanin synthesized. Also to a lower extent, capable of hydroxylating tyrosine and producing melanin. The protein is 5,6-dihydroxyindole-2-carboxylic acid oxidase (Tyrp1) of Mus musculus (Mouse).